A 121-amino-acid polypeptide reads, in one-letter code: Holin-like protein CidA (121 aa).

3 helical membrane-spanning segments follow: residues 27–47, 58–78, and 89–109; these read VHLPIPGSIIGIFLLLISLKF, GADFLLKELILFFIPSAVAVI, and IDLIFIIMISTLCVTLVTGIL.

It belongs to the CidA/LrgA family. CidA subfamily.

It is found in the cell membrane. Functionally, increases the activity of extracellular murein hydrolases possibly by mediating their export via hole formation. Inhibited by the antiholin-like proteins LrgAB. In an unstressed cell, the LrgAB products probably inhibit the function of the CidA protein. When a cell is stressed by the addition of antibiotics or by other factors in the environment, CidA possibly oligomerizes within the bacterial cell membrane, creating lesions that disrupt the proton motive force, which in turn results in loss of cell viability. These lesions are also hypothesized to regulate the subsequent cell lysis by either allowing the murein hydrolases access to the cell wall substrate and/or regulating their activity by a possible change in the cell wall pH that results from loss of membrane potential. The chain is Holin-like protein CidA from Bacillus cytotoxicus (strain DSM 22905 / CIP 110041 / 391-98 / NVH 391-98).